A 258-amino-acid chain; its full sequence is Phosphate import ATP-binding protein PstB 2 (258 aa).

Residues 12–253 enclose the ABC transporter domain; it reads IQVRDLNFYY…PQQKQTEDYI (242 aa). 44-51 serves as a coordination point for ATP; it reads GPSGCGKS.

This sequence belongs to the ABC transporter superfamily. Phosphate importer (TC 3.A.1.7) family. The complex is composed of two ATP-binding proteins (PstB), two transmembrane proteins (PstC and PstA) and a solute-binding protein (PstS).

It localises to the cell inner membrane. The enzyme catalyses phosphate(out) + ATP + H2O = ADP + 2 phosphate(in) + H(+). In terms of biological role, part of the ABC transporter complex PstSACB involved in phosphate import. Responsible for energy coupling to the transport system. This chain is Phosphate import ATP-binding protein PstB 2, found in Yersinia pestis bv. Antiqua (strain Nepal516).